Consider the following 294-residue polypeptide: Eukaryotic translation initiation factor 3 subunit G (294 aa).

Positions 1-22 are enriched in basic and acidic residues; that stretch reads MQTFHHQDTGSEDFRQNTMDEK. Disordered regions lie at residues 1 to 42 and 164 to 211; these read MQTF…DGTK and GGMG…SDDD. Positions 30–42 are enriched in polar residues; it reads STPQITQNADGTK. Gly residues predominate over residues 193-205; sequence GPGGPGGPGGAAG. The RRM domain occupies 214 to 292; sequence LTLRVTNLSE…LIMKVDYSKK (79 aa).

The protein belongs to the eIF-3 subunit G family. As to quaternary structure, component of the eukaryotic translation initiation factor 3 (eIF-3) complex.

It is found in the cytoplasm. Its function is as follows. RNA-binding component of the eukaryotic translation initiation factor 3 (eIF-3) complex, which is involved in protein synthesis of a specialized repertoire of mRNAs and, together with other initiation factors, stimulates binding of mRNA and methionyl-tRNAi to the 40S ribosome. The eIF-3 complex specifically targets and initiates translation of a subset of mRNAs involved in cell proliferation. This subunit can bind 18S rRNA. The sequence is that of Eukaryotic translation initiation factor 3 subunit G from Yarrowia lipolytica (strain CLIB 122 / E 150) (Yeast).